Consider the following 618-residue polypeptide: Camphene synthase, chloroplastic (618 aa).

A chloroplast-targeting transit peptide spans 1 to 51 (MALLSITPLVSRSCLSSSHEIKALRRTIPTLGICRPGKSVAHSINMCLTSV). Mg(2+) contacts are provided by Asp-369, Asp-373, and Asp-521. A DDXXD motif motif is present at residues 369-373 (DDMYD).

The protein belongs to the terpene synthase family. Tpsd subfamily. Requires Mg(2+) as cofactor. Mn(2+) is required as a cofactor. It depends on K(+) as a cofactor.

The protein localises to the plastid. Its subcellular location is the chloroplast. The enzyme catalyses (2E)-geranyl diphosphate = (1S,4R)-camphene + diphosphate. The protein operates within terpene metabolism; oleoresin biosynthesis. Involved in defensive oleoresin formation in conifers in response to insect attack or other injury. Involved in monoterpene (C10) olefins biosynthesis. In Abies grandis (Grand fir), this protein is Camphene synthase, chloroplastic (ag6).